Here is a 212-residue protein sequence, read N- to C-terminus: Peroxisomal membrane protein 4 (212 aa).

Helical transmembrane passes span 97-117 and 153-173; these read GKTY…LVFG and LDPF…LFEY. Asparagine 206 is a glycosylation site (N-linked (GlcNAc...) asparagine).

It belongs to the peroxisomal membrane protein PXMP2/4 family. As to quaternary structure, interacts with PEX19.

The protein localises to the peroxisome membrane. The sequence is that of Peroxisomal membrane protein 4 (PXMP4) from Bos taurus (Bovine).